Here is a 219-residue protein sequence, read N- to C-terminus: Oligoribonuclease (219 aa).

Positions 19 to 184 constitute an Exonuclease domain; sequence LVWVDLEMTG…ADIVESIREL (166 aa). The active site involves tyrosine 141.

The protein belongs to the oligoribonuclease family.

It localises to the cytoplasm. Its function is as follows. 3'-to-5' exoribonuclease specific for small oligoribonucleotides. The chain is Oligoribonuclease from Corynebacterium glutamicum (strain R).